The chain runs to 218 residues: MIP18 family protein galla-1 (218 aa).

The disordered stretch occupies residues 1-59; the sequence is MLSYIKRKLSESDSGVSSVATVTSSCGGDSGRAGGTGSSESGTGSSSASISGRSQNADE. Residues 12–27 are compositionally biased toward low complexity; the sequence is SDSGVSSVATVTSSCG. Residue serine 14 is modified to Phosphoserine. Gly residues predominate over residues 28-37; the sequence is GDSGRAGGTG. A compositionally biased stretch (low complexity) spans 38-54; that stretch reads SSESGTGSSSASISGRS. Residue serine 65 is modified to Phosphoserine.

This sequence belongs to the MIP18 family. Component of the CGX complex composed of crb, galla (galla-1 or galla-2) and Xpd. Interacts with crb (via intracellular domain). Is not able to interact with Xpd in the absence of crb.

The protein resides in the apical cell membrane. The protein localises to the cytoplasm. Its subcellular location is the cytoskeleton. It is found in the spindle. Its function is as follows. Component of the crb-galla-Xpd (CGX) complex which is essential for proper mitotic chromosome segregation in early embryos. The CGX complex is also required for cell proliferation in developing wing disks. In the CGX complex, acts with crb to recruit Xpd thus forming the functional complex. The sequence is that of MIP18 family protein galla-1 from Drosophila melanogaster (Fruit fly).